The following is a 264-amino-acid chain: 2-hydroxyhexa-2,4-dienoate hydratase (264 aa).

The protein belongs to the hydratase/decarboxylase family.

It catalyses the reaction (2Z,4Z)-2-hydroxyhexa-2,4-dienoate + H2O = 4-hydroxy-2-oxohexanoate. Involved in the catatabolism of testosterone. Catalyzes the hydration of 2-hydroxyhexa-2,4-dienoic acid to 4-hydroxy-2-oxohexanoic acid. This Comamonas testosteroni (Pseudomonas testosteroni) protein is 2-hydroxyhexa-2,4-dienoate hydratase (tesE).